A 504-amino-acid chain; its full sequence is UDP-N-acetylglucosamine--peptide N-acetylglucosaminyltransferase GtfA subunit (504 aa).

Residue 16–19 (GVEY) coordinates UDP. H243 provides a ligand contact to N-acetyl-D-glucosamine. 385–386 (HK) contributes to the UDP binding site. 405–408 (EGFG) serves as a coordination point for N-acetyl-D-glucosamine.

It belongs to the glycosyltransferase group 1 family. Glycosyltransferase 4 subfamily. Interacts with stabilizing protein GtfB (Gtf1), probably via the N-terminus of this protein; probably forms a heterotetramer with 2 subunits each of GtfA and GtfB. Part of the accessory SecA2/SecY2 protein translocation apparatus.

Its subcellular location is the cytoplasm. It localises to the cell membrane. It catalyses the reaction L-seryl-[protein] + UDP-N-acetyl-alpha-D-glucosamine = 3-O-[N-acetyl-alpha-D-glucosaminyl]-L-seryl-[protein] + UDP + H(+). The protein operates within protein modification; protein glycosylation. Its function is as follows. Required for polymorphic O-glycosylation of serine-rich repeat protein Fap1. Catalyzes the first step in glycosylation by transferring N-acetylglucosamine from UDP-GlcNAc to serine residues in Fap1. Part of the accessory SecA2/SecY2 system specifically required to export Fap1, a serine-rich fimbrial adhesin encoded upstream in the same operon. The GtfA-GtfB (Gtf1-Gtf2 in this bacteria) complex adds GlcNAc from UDP-GlcNAc to Fap1, attaching the first sugar residue. Cannot use not UDP-Glc as substrate. This subunit has very low glycosyltransferase activity; the GtfB stabilizing protein enhances membrane association, protease resistance and glycosyltransferase activity. The polypeptide is UDP-N-acetylglucosamine--peptide N-acetylglucosaminyltransferase GtfA subunit (Streptococcus parasanguinis).